Reading from the N-terminus, the 209-residue chain is Imidazole glycerol phosphate synthase subunit HisH (209 aa).

The Glutamine amidotransferase type-1 domain occupies 5–209 (AIAIIDYDMG…LRNFVALVKD (205 aa)). Cys-83 functions as the Nucleophile in the catalytic mechanism. Residues His-188 and Glu-190 contribute to the active site.

As to quaternary structure, heterodimer of HisH and HisF.

It localises to the cytoplasm. It carries out the reaction 5-[(5-phospho-1-deoxy-D-ribulos-1-ylimino)methylamino]-1-(5-phospho-beta-D-ribosyl)imidazole-4-carboxamide + L-glutamine = D-erythro-1-(imidazol-4-yl)glycerol 3-phosphate + 5-amino-1-(5-phospho-beta-D-ribosyl)imidazole-4-carboxamide + L-glutamate + H(+). The enzyme catalyses L-glutamine + H2O = L-glutamate + NH4(+). The protein operates within amino-acid biosynthesis; L-histidine biosynthesis; L-histidine from 5-phospho-alpha-D-ribose 1-diphosphate: step 5/9. Functionally, IGPS catalyzes the conversion of PRFAR and glutamine to IGP, AICAR and glutamate. The HisH subunit catalyzes the hydrolysis of glutamine to glutamate and ammonia as part of the synthesis of IGP and AICAR. The resulting ammonia molecule is channeled to the active site of HisF. This chain is Imidazole glycerol phosphate synthase subunit HisH, found in Thermosynechococcus vestitus (strain NIES-2133 / IAM M-273 / BP-1).